A 189-amino-acid polypeptide reads, in one-letter code: Transcription factor FapR (189 aa).

It belongs to the FapR family.

Functionally, transcriptional factor involved in regulation of membrane lipid biosynthesis by repressing genes involved in fatty acid and phospholipid metabolism. The chain is Transcription factor FapR from Exiguobacterium sp. (strain ATCC BAA-1283 / AT1b).